Reading from the N-terminus, the 458-residue chain is Monomethylamine methyltransferase MtmB1 (458 aa).

O202 is a non-standard amino acid (pyrrolysine).

Belongs to the monomethylamine methyltransferase family. Can form a complex with MtmC.

It catalyses the reaction Co(I)-[methylamine-specific corrinoid protein] + methylamine + H(+) = methyl-Co(III)-[methylamine-specific corrinoid protein] + NH4(+). The protein operates within one-carbon metabolism; methanogenesis from methylamine. Functionally, catalyzes the transfer of the methyl group from monomethylamine to the corrinoid cofactor of MtmC. The chain is Monomethylamine methyltransferase MtmB1 (mtmB1) from Methanosarcina acetivorans (strain ATCC 35395 / DSM 2834 / JCM 12185 / C2A).